Here is a 322-residue protein sequence, read N- to C-terminus: Solute carrier family 35 member B1 (322 aa).

Transmembrane regions (helical) follow at residues 12-32, 51-71, 85-105, 136-156, 168-188, 210-230, 243-263, and 285-305; these read LRLP…GILQ, FALT…KILI, WLYA…NSAL, YPMA…LFMY, TIGY…LTGV, LWST…WEFL, ILLF…TVVY, and VILF…LVFL. The short motif at 318–322 is the Di-lysine motif element; it reads KKTSH.

Belongs to the nucleotide-sugar transporter family. SLC35B subfamily.

Its subcellular location is the endoplasmic reticulum membrane. The catalysed reaction is ADP(in) + ATP(out) = ADP(out) + ATP(in). The enzyme catalyses UDP(out) + ATP(in) = UDP(in) + ATP(out). It carries out the reaction UTP(out) + ATP(in) = UTP(in) + ATP(out). It catalyses the reaction dATP(out) + ATP(in) = dATP(in) + ATP(out). Its function is as follows. ATP:ADP antiporter that catalyzes the exchange of ATP and ADP across the endoplasmic reticulum (ER) membrane. Imports ATP from the cytosol to the ER lumen and exports ADP in the opposite direction. Regulates ER energy metabolism and protein biogenesis. Appears to be part of a calcium-dependent ER to cytosol low energy response axis, where calcium efflux from ER to the cytosol triggers ATP import into the ER lumen to maintain sufficient ATP supply. Provides ATP to ER chaperone HSPA5 that drives protein folding and trafficking in the ER. Can transport dATP, UTP or UDP in exchange for ATP, but the physiological relevance of this process remains to be established. The protein is Solute carrier family 35 member B1 (SLC35B1) of Bos taurus (Bovine).